The chain runs to 515 residues: uncharacterized protein (515 aa).

3 disordered regions span residues 117 to 188 (DNIL…RKSQ), 362 to 453 (RSTS…AESM), and 496 to 515 (GNAV…DYFN). Composition is skewed to basic and acidic residues over residues 370-380 (KNVESETKQEE), 388-402 (PAED…EVIE), and 428-438 (PIKEIEDKVEP). Residues 502–515 (ADTESMDDFMDYFN) show a composition bias toward acidic residues.

This is an uncharacterized protein from Ostreid herpesvirus 1 (isolate France) (OsHV-1).